A 213-amino-acid chain; its full sequence is Phosphoribosyl-dephospho-CoA transferase (213 aa).

Catalysis depends on residues Asp-135 and Asp-137.

This sequence belongs to the MdcG family.

The enzyme catalyses apo-[malonate decarboxylase ACP] + 2'-(5''-triphospho-alpha-D-ribosyl)-3'-dephospho-CoA = holo-[malonate decarboxylase ACP] + diphosphate. Functionally, transfers 2'-(5-triphosphoribosyl)-3'-dephosphocoenzyme-A to the apo-[acyl-carrier-protein] of the malonate decarboxylase to yield holo-[acyl-carrier-protein]. This chain is Phosphoribosyl-dephospho-CoA transferase, found in Xanthomonas campestris pv. campestris (strain ATCC 33913 / DSM 3586 / NCPPB 528 / LMG 568 / P 25).